The following is a 415-amino-acid chain: Tyrosine--tRNA ligase (415 aa).

Residue Tyr-40 participates in L-tyrosine binding. The short motif at 45-54 (ATAKSLHVGS) is the 'HIGH' region element. Tyr-178 and Gln-182 together coordinate L-tyrosine. The 'KMSKS' region signature appears at 238–242 (KMGKS). Lys-241 contacts ATP. Residues 350–414 (ASIVQLIVKT…GKKRHALVQL (65 aa)) enclose the S4 RNA-binding domain.

This sequence belongs to the class-I aminoacyl-tRNA synthetase family. TyrS type 1 subfamily. As to quaternary structure, homodimer.

The protein localises to the cytoplasm. It catalyses the reaction tRNA(Tyr) + L-tyrosine + ATP = L-tyrosyl-tRNA(Tyr) + AMP + diphosphate + H(+). Functionally, catalyzes the attachment of tyrosine to tRNA(Tyr) in a two-step reaction: tyrosine is first activated by ATP to form Tyr-AMP and then transferred to the acceptor end of tRNA(Tyr). The chain is Tyrosine--tRNA ligase from Ruegeria pomeroyi (strain ATCC 700808 / DSM 15171 / DSS-3) (Silicibacter pomeroyi).